A 793-amino-acid chain; its full sequence is Kinesin-like protein KIF3C (793 aa).

A Kinesin motor domain is found at 10-365 (ALKVVARCRP…LRFANRAKNI (356 aa)). 97–104 (GQTGTGKT) lines the ATP pocket. 3 disordered regions span residues 251–288 (ERQNKAGPNTAGGASTPSSGGSGGGGGSGGGAGGERPK), 395–423 (EKRGMLGKRPRRKSSRGKKAVSAPPGYPE), and 756–793 (KVRKSRSWCQSPQRPPPSTTHASLASASLRPATVADHE). Residues 270 to 284 (GGSGGGGGSGGGAGG) are compositionally biased toward gly residues. Positions 376–630 (KDTLLREFQE…QNEQTRELKL (255 aa)) form a coiled coil. The segment covering 399 to 413 (MLGKRPRRKSSRGKK) has biased composition (basic residues). The segment at 631–793 (KYLIIENFIP…LRPATVADHE (163 aa)) is globular.

It belongs to the TRAFAC class myosin-kinesin ATPase superfamily. Kinesin family. Kinesin II subfamily. Heterodimer of KIF3A and KIF3C.

The protein resides in the cytoplasm. The protein localises to the cytoskeleton. Functionally, microtubule-based anterograde translocator for membranous organelles. The chain is Kinesin-like protein KIF3C (KIF3C) from Pongo abelii (Sumatran orangutan).